A 415-amino-acid chain; its full sequence is Peptide chain release factor subunit 1 (415 aa).

This sequence belongs to the eukaryotic release factor 1 family. Heterodimer of two subunits, one of which binds GTP.

It is found in the cytoplasm. Functionally, directs the termination of nascent peptide synthesis (translation) in response to the termination codons UAA, UAG and UGA. In Thermococcus kodakarensis (strain ATCC BAA-918 / JCM 12380 / KOD1) (Pyrococcus kodakaraensis (strain KOD1)), this protein is Peptide chain release factor subunit 1.